The following is a 1434-amino-acid chain: Probable ATP-dependent RNA helicase spindle-E (1434 aa).

The Helicase ATP-binding domain occupies 126–295 (INAINENPVV…FANESSAPPV (170 aa)). 139-146 (GETGCGKT) contributes to the ATP binding site. The DEAH box signature appears at 241–244 (DEVH). Positions 356-527 (TGKSYNQSLR…NCVLKAKELK (172 aa)) constitute a Helicase C-terminal domain. The Tudor domain occupies 936 to 999 (AGAITKGLML…RLMSQDLLRH (64 aa)).

It belongs to the DEAD box helicase family. DEAH subfamily.

The protein resides in the cytoplasm. It catalyses the reaction ATP + H2O = ADP + phosphate + H(+). Its function is as follows. Probable ATP-binding RNA helicase which plays a central role during spermatogenesis and oogenesis by repressing transposable elements and preventing their mobilization, which is essential for the germline integrity. Acts via the piRNA metabolic process, which mediates the repression of transposable elements during meiosis by forming complexes composed of piRNAs and Piwi and govern the methylation and subsequent repression of transposons. Involved in the repression of LTR retrotransposon copia. Also involved in telomere regulation by repressing specialized telomeric retroelements HeT-A, TAHRE, and TART; Drosophila telomeres being maintained by transposition of specialized telomeric retroelements. Involved in telomeric trans-silencing, a repression mechanism by which a transposon or a transgene inserted in subtelomeric heterochromatin has the capacity to repress in trans in the female germline, a homologous transposon, or transgene located in euchromatin. Involved in the repression of testis-expressed Stellate genes by the homologous Su(Ste) repeats. Required for anteroposterior and dorsoventral axis formation during oogenesis. The sequence is that of Probable ATP-dependent RNA helicase spindle-E (spn-E) from Drosophila persimilis (Fruit fly).